The primary structure comprises 155 residues: Ribosomal RNA large subunit methyltransferase H (155 aa).

S-adenosyl-L-methionine is bound by residues leucine 73, glycine 104, and 123 to 128 (LSRMTF).

Belongs to the RNA methyltransferase RlmH family. Homodimer.

The protein localises to the cytoplasm. The enzyme catalyses pseudouridine(1915) in 23S rRNA + S-adenosyl-L-methionine = N(3)-methylpseudouridine(1915) in 23S rRNA + S-adenosyl-L-homocysteine + H(+). Its function is as follows. Specifically methylates the pseudouridine at position 1915 (m3Psi1915) in 23S rRNA. The chain is Ribosomal RNA large subunit methyltransferase H from Methylococcus capsulatus (strain ATCC 33009 / NCIMB 11132 / Bath).